Reading from the N-terminus, the 285-residue chain is Complex I assembly factor TIMMDC1, mitochondrial (285 aa).

The next 4 helical transmembrane spans lie at 80–100, 137–159, 165–185, and 188–208; these read AALS…FIYA, RWSW…LTVY, LSHF…NLGL, and LVAG…LLMA.

This sequence belongs to the Tim17/Tim22/Tim23 family. Associates with the intermediate 315 kDa subcomplex of incompletely assembled complex I. Interacts with TMEM70.

It localises to the mitochondrion membrane. Functionally, chaperone protein involved in the assembly of the mitochondrial NADH:ubiquinone oxidoreductase complex (complex I). Participates in constructing the membrane arm of complex I. This is Complex I assembly factor TIMMDC1, mitochondrial from Rattus norvegicus (Rat).